The chain runs to 471 residues: Putative multidrug resistance protein MdtD (471 aa).

At 1–11 (MTDLPDSTRWQ) the chain is on the periplasmic side. Residues 12-32 (LWIVAFGFFMQSLDTTIVNTA) form a helical membrane-spanning segment. The Cytoplasmic segment spans residues 33–48 (LPSMAQSLGESPLHMH). Residues 49–69 (MVIVSYVLTVAVMLPASGWLA) form a helical membrane-spanning segment. At 70-76 (DKVGVRN) the chain is on the periplasmic side. The helical transmembrane segment at 77 to 97 (IFFTAIVLFTLGSLFCALSGT) threads the bilayer. Topologically, residues 98 to 101 (LNEL) are cytoplasmic. Residues 102-124 (LLARALQGVGGAMMVPVGRLTVM) traverse the membrane as a helical segment. Over 125 to 137 (KIVPREQYMAAMT) the chain is Periplasmic. The chain crosses the membrane as a helical span at residues 138-158 (FVTLPGQVGPLLGPALGGLLV). Over 159 to 164 (EYASWH) the chain is Cytoplasmic. A helical transmembrane segment spans residues 165–185 (WIFLINIPVGIIGAIATLMLM). At 186-196 (PNYTMQTRRFD) the chain is on the periplasmic side. A helical transmembrane segment spans residues 197–217 (LSGFLLLAVGMAVLTLALDGS). The Cytoplasmic segment spans residues 218 to 224 (KGTGLSP). The chain crosses the membrane as a helical span at residues 225 to 245 (LTIDGLVAVGVVALVLYLLHA). Over 246–262 (RNNNRALFSLKLFRTRT) the chain is Periplasmic. A helical transmembrane segment spans residues 263-283 (FSLGLAGSFAGRIGSGMLPFM). The Cytoplasmic segment spans residues 284 to 285 (TP). Residues 286–306 (VFLQIGLGFSPFHAGLMMIPM) traverse the membrane as a helical segment. Residues 307-341 (VLGSMGMKRIVVQVVNRFGYRRVLVATTLGLSLVT) are Periplasmic-facing. The chain crosses the membrane as a helical span at residues 342 to 362 (LLFMTTALLGWYYVLPFVLFL). The Cytoplasmic portion of the chain corresponds to 363 to 395 (QGMVNSTRFSSMNTLTLKDLPDNLASSGNSLLS). The helical transmembrane segment at 396 to 416 (MIMQLSMSIGVTIAGLLLGLF) threads the bilayer. At 417–430 (GSQHVSVDSGTTQT) the chain is on the periplasmic side. The chain crosses the membrane as a helical span at residues 431–451 (VFMYTWLSMAFIIALPAFIFA). The Cytoplasmic segment spans residues 452–471 (RVPNDTHQNVAISRRKRSAQ).

It belongs to the major facilitator superfamily. TCR/Tet family.

It localises to the cell inner membrane. The protein is Putative multidrug resistance protein MdtD of Escherichia coli O8 (strain IAI1).